The following is a 485-amino-acid chain: N-succinylglutamate 5-semialdehyde dehydrogenase (485 aa).

Residue 220-225 (GSANTG) coordinates NAD(+). Active-site residues include Glu243 and Cys278.

The protein belongs to the aldehyde dehydrogenase family. AstD subfamily.

It catalyses the reaction N-succinyl-L-glutamate 5-semialdehyde + NAD(+) + H2O = N-succinyl-L-glutamate + NADH + 2 H(+). Its pathway is amino-acid degradation; L-arginine degradation via AST pathway; L-glutamate and succinate from L-arginine: step 4/5. Its function is as follows. Catalyzes the NAD-dependent reduction of succinylglutamate semialdehyde into succinylglutamate. The sequence is that of N-succinylglutamate 5-semialdehyde dehydrogenase from Vibrio vulnificus (strain YJ016).